A 335-amino-acid chain; its full sequence is 2-acylglycerol O-acyltransferase 2-B (335 aa).

The next 2 membrane-spanning stretches (helical) occupy residues 24–44 (WAVS…LLLF) and 104–124 (YIMG…NFCT). N-linked (GlcNAc...) asparagine glycosylation occurs at asparagine 206.

The protein belongs to the diacylglycerol acyltransferase family.

Its subcellular location is the endoplasmic reticulum membrane. It localises to the cytoplasm. The protein resides in the perinuclear region. It carries out the reaction a 2-acylglycerol + an acyl-CoA = a 1,2-diacylglycerol + CoA. The catalysed reaction is a 2-acylglycerol + an acyl-CoA = a 1,2-diacyl-sn-glycerol + CoA. It catalyses the reaction a 2-acylglycerol + an acyl-CoA = a 2,3-diacyl-sn-glycerol + CoA. The enzyme catalyses a 1-acylglycerol + an acyl-CoA = a 1,2-diacylglycerol + CoA. It carries out the reaction a 1-acylglycerol + an acyl-CoA = a 1,3-diacylglycerol + CoA. The catalysed reaction is 1-O-alkylglycerol + an acyl-CoA = 1-O-alkyl-3-acylglycerol + CoA. It catalyses the reaction an acyl-CoA + a 1,2-diacyl-sn-glycerol = a triacyl-sn-glycerol + CoA. Its pathway is glycerolipid metabolism; triacylglycerol biosynthesis. In terms of biological role, catalyzes the formation of diacylglycerol from 2-monoacylglycerol and fatty acyl-CoA. Functionally, involved in glycerolipid synthesis and lipid metabolism. Catalyzes the formation of diacylglycerol, the precursor of triacylglycerol, by transferring the acyl chain of a fatty acyl-CoA to a monoacylglycerol. Plays a central role in absorption of dietary fat in the small intestine by catalyzing the resynthesis of triacylglycerol in enterocytes. Has a preference toward monoacylglycerols containing unsaturated fatty acids in an order of C18:3 &gt; C18:2 &gt; C18:1 &gt; C18:0 at sn-2. Able to use 1-monoalkylglycerol (1-MAkG, 1-O-alkylglycerol) as an acyl acceptor for the synthesis of monoalkyl-monoacylglycerol (MAMAG, 1-O-alkyl-3-acylglycerol or 1-O-alkyl-2-acylglycerol) and subsequently, with lower efficiency, may add another acyl chain producing monoalkyl-diacylglycerol (MADAG, 1-O-alkyl-2,3-diacylglycerol). Possesses weak but significant activity with diacylglycerol as substrate, producing triacylglycerol (triacyl-sn-glycerol). The protein is 2-acylglycerol O-acyltransferase 2-B (mogat2-b) of Xenopus laevis (African clawed frog).